The primary structure comprises 163 residues: Nucleotide-binding protein Mvan_0997 (163 aa).

Belongs to the YajQ family.

Functionally, nucleotide-binding protein. This is Nucleotide-binding protein Mvan_0997 from Mycolicibacterium vanbaalenii (strain DSM 7251 / JCM 13017 / BCRC 16820 / KCTC 9966 / NRRL B-24157 / PYR-1) (Mycobacterium vanbaalenii).